Here is a 442-residue protein sequence, read N- to C-terminus: UDP-N-acetylmuramoylalanine--D-glutamate ligase (442 aa).

ATP is bound at residue 113–119 (GSNGKTT).

This sequence belongs to the MurCDEF family.

It localises to the cytoplasm. It carries out the reaction UDP-N-acetyl-alpha-D-muramoyl-L-alanine + D-glutamate + ATP = UDP-N-acetyl-alpha-D-muramoyl-L-alanyl-D-glutamate + ADP + phosphate + H(+). It functions in the pathway cell wall biogenesis; peptidoglycan biosynthesis. Functionally, cell wall formation. Catalyzes the addition of glutamate to the nucleotide precursor UDP-N-acetylmuramoyl-L-alanine (UMA). The polypeptide is UDP-N-acetylmuramoylalanine--D-glutamate ligase (Coxiella burnetii (strain Dugway 5J108-111)).